Reading from the N-terminus, the 475-residue chain is E3 ubiquitin-protein ligase TRIM21 (475 aa).

Residues 16 to 55 form an RING-type zinc finger; it reads CPICLDPFVEPVSIECGHSFCQECISQVGKGGGSVCPVCR. Residues Cys92, His95, Cys114, and His120 each contribute to the Zn(2+) site. The segment at 92–123 adopts a B box-type zinc-finger fold; sequence CAVHGERLHLFCEKDGKALCWVCAQSRKHRDH. Positions 128 to 238 form a coiled coil; that stretch reads LEEAAQEYQE…ISELDRRCHS (111 aa). At Ser266 the chain carries Phosphoserine. The B30.2/SPRY domain occupies 268–465; sequence ELRSVCHVPG…NTAPLTLCPL (198 aa).

It belongs to the TRIM/RBCC family. In terms of assembly, homotrimer. Interacts (via C-terminus) with IRF8 (via C-terminus). Component of a SCF(SKP2)-like complex containing CUL1, SKP1, TRIM21 and SKP2. Interacts with CALR, CUL1, FBXW11, HSPA5, IKBKB, IRF3, SKP1 and VCP. Interacts with SKP2; the interaction with SKP2 does not depend on an intact F-box domain. Interacts (via N-terminus and C-terminus) with DCP2 (via N-terminus and C-terminus). Interacts with ULK1, BECN1 and with ATG8 family members, including GABARAP, GABARAPL1, GABARAPL2 and MAP1LC3C/LC3C. Interacts with TRIM21 and SQSTM1/sequestosome 1. Interacts with IRF3. Interacts (via the SPRY domain) with NMI (via coiled-coil domain); the interaction promotes 'Lys-63'-linked ubiquitination of NMI. Interacts with IFI35 and NMI; the interaction facilitates NMI-IFI35 complex formation. As to quaternary structure, (Microbial infection) Interacts (via B30.2/SPRY domain) with severe fever with thrombocytopenia syndrome virus (SFTSV) NSs; this interaction activates NFE2L2-mediated transcriptional activation of antioxidant genes. Post-translationally, autoubiquitinated; does not lead to its proteasomal degradation. Deubiquitinated by USP4; leading to its stabilization. In terms of tissue distribution, isoform 1 and isoform 2 are expressed in fetal and adult heart and fetal lung.

The protein localises to the cytoplasm. The protein resides in the cytoplasmic vesicle. It is found in the autophagosome. It localises to the nucleus. Its subcellular location is the P-body. The protein localises to the stress granule. It carries out the reaction S-ubiquitinyl-[E2 ubiquitin-conjugating enzyme]-L-cysteine + [acceptor protein]-L-lysine = [E2 ubiquitin-conjugating enzyme]-L-cysteine + N(6)-ubiquitinyl-[acceptor protein]-L-lysine.. The protein operates within protein modification; protein ubiquitination. Its function is as follows. E3 ubiquitin-protein ligase whose activity is dependent on E2 enzymes, UBE2D1, UBE2D2, UBE2E1 and UBE2E2. Forms a ubiquitin ligase complex in cooperation with the E2 UBE2D2 that is used not only for the ubiquitination of USP4 and IKBKB but also for its self-ubiquitination. Component of cullin-RING-based SCF (SKP1-CUL1-F-box protein) E3 ubiquitin-protein ligase complexes such as SCF(SKP2)-like complexes. A TRIM21-containing SCF(SKP2)-like complex is shown to mediate ubiquitination of CDKN1B ('Thr-187' phosphorylated-form), thereby promoting its degradation by the proteasome. Monoubiquitinates IKBKB that will negatively regulates Tax-induced NF-kappa-B signaling. Negatively regulates IFN-beta production post-pathogen recognition by catalyzing polyubiquitin-mediated degradation of IRF3. Mediates the ubiquitin-mediated proteasomal degradation of IgG1 heavy chain, which is linked to the VCP-mediated ER-associated degradation (ERAD) pathway. Promotes IRF8 ubiquitination, which enhanced the ability of IRF8 to stimulate cytokine genes transcription in macrophages. Plays a role in the regulation of the cell cycle progression. Enhances the decapping activity of DCP2. Exists as a ribonucleoprotein particle present in all mammalian cells studied and composed of a single polypeptide and one of four small RNA molecules. At least two isoforms are present in nucleated and red blood cells, and tissue specific differences in RO/SSA proteins have been identified. The common feature of these proteins is their ability to bind HY RNAs.2. Involved in the regulation of innate immunity and the inflammatory response in response to IFNG/IFN-gamma. Organizes autophagic machinery by serving as a platform for the assembly of ULK1, Beclin 1/BECN1 and ATG8 family members and recognizes specific autophagy targets, thus coordinating target recognition with assembly of the autophagic apparatus and initiation of autophagy. Also regulates autophagy through FIP200/RB1CC1 ubiquitination and subsequent decreased protein stability. Represses the innate antiviral response by facilitating the formation of the NMI-IFI35 complex through 'Lys-63'-linked ubiquitination of NMI. During viral infection, promotes cell pyroptosis by mediating 'Lys-6'-linked ubiquitination of ISG12a/IFI27, facilitating its translocation into the mitochondria and subsequent CASP3 activation. When up-regulated through the IFN/JAK/STAT signaling pathway, promotes 'Lys-27'-linked ubiquitination of MAVS, leading to the recruitment of TBK1 and up-regulation of innate immunity. Mediates 'Lys-63'-linked polyubiquitination of G3BP1 in response to heat shock, leading to stress granule disassembly. This Homo sapiens (Human) protein is E3 ubiquitin-protein ligase TRIM21.